Here is a 58-residue protein sequence, read N- to C-terminus: Large ribosomal subunit protein bL32 (58 aa).

Disordered regions lie at residues 1-22 and 39-58; these read MAVPKKKTSNAKRDQRKAHWKR and LSGRSNSFVYPQDEEEDDEE.

Belongs to the bacterial ribosomal protein bL32 family.

The sequence is that of Large ribosomal subunit protein bL32 from Crocosphaera subtropica (strain ATCC 51142 / BH68) (Cyanothece sp. (strain ATCC 51142)).